Reading from the N-terminus, the 193-residue chain is Copper-binding lipoprotein NosL (193 aa).

An N-terminal signal peptide occupies residues 1 to 19 (MRTRLRFVLVAAALALLSA). Cys20 is lipidated: N-palmitoyl cysteine. Residue Cys20 is the site of S-diacylglycerol cysteine attachment.

Belongs to the NosL family. As to quaternary structure, monomer. Apo-NosL can form homodimers.

It is found in the cell membrane. Its function is as follows. May act as a metallochaperone involved in nitrous oxide reductase assembly. Specifically binds Cu(+). The chain is Copper-binding lipoprotein NosL from Achromobacter cycloclastes.